The chain runs to 310 residues: uncharacterized protein (310 aa).

Residues Met1–Arg11 show a composition bias toward basic residues. Disordered stretches follow at residues Met1–Ala227 and Ala242–Glu310. Residues Met12 to Pro50 show a composition bias toward polar residues. Residues Ser51–Glu80 are compositionally biased toward basic and acidic residues. A compositionally biased stretch (acidic residues) spans Pro91–Ser105. Over residues Thr110–Leu121 the composition is skewed to low complexity. Composition is skewed to basic and acidic residues over residues Val126–Pro150 and Leu182–Pro195. The segment covering Ala242–Glu253 has biased composition (acidic residues). Positions Asn254–Leu265 are enriched in basic and acidic residues. Phosphoserine is present on Ser285. A compositionally biased stretch (polar residues) spans Asp297–Glu310.

This is an uncharacterized protein from Schizosaccharomyces pombe (strain 972 / ATCC 24843) (Fission yeast).